Consider the following 975-residue polypeptide: Chromosome transmission fidelity protein 18 homolog (975 aa).

Disordered stretches follow at residues 30–83 (EGAS…KRQV) and 114–141 (SEEMEEPPPPDSSPTDITPPPSPEDLAE). Thr51 carries the phosphothreonine modification. Positions 58–77 (RGDAASSPAPAASVGSSQGG) are enriched in low complexity. Ser64 bears the Phosphoserine mark. The span at 122–136 (PPDSSPTDITPPPSP) shows a compositional bias: pro residues. Phosphoserine is present on Ser225. Disordered regions lie at residues 246 to 276 (SDTLHSLRSGEEEAAQPLGAPEEEPTDGQDA) and 320 to 346 (RPSRKPRPSVEPARVSKEATAPGKWKS). Residue 374-381 (GPPGLGKT) participates in ATP binding. The interval 858 to 896 (ASARVENSPQVDGSPPGLEGLLGGIGEKGVHRPAPRNHE) is disordered. Ser871 bears the Phosphoserine mark.

The protein belongs to the activator 1 small subunits family. CTF18 subfamily. Component of the CTF18-RFC complex, which consists of CTF18, CTF8, DCC1, RFC2, RFC3, RFC4 and RFC5. During assembly of the CTF18-RFC complex, CTF18 may first assemble into a subcomplex with RFC2, RFC3, RFC4 and RFC5. CTF18 then interacts directly with CTF8, which in turn interacts with DCC1. The CTF18-RFC complex associates with PCNA and with DNA polymerase POLH. The CTF18-RFC complex does not interact with the Rad9/Rad1/Hus1 complex. CTF18 interacts with SMC1A and RAD21. Interacts with DDX11.

It is found in the nucleus. Functionally, chromosome cohesion factor involved in sister chromatid cohesion and fidelity of chromosome transmission. Component of one of the cell nuclear antigen loader complexes, CTF18-replication factor C (CTF18-RFC), which consists of CTF18, CTF8, DCC1, RFC2, RFC3, RFC4 and RFC5. The CTF18-RFC complex binds to single-stranded and primed DNAs and has weak ATPase activity that is stimulated by the presence of primed DNA, replication protein A (RPA) and by proliferating cell nuclear antigen (PCNA). The CTF18-RFC complex catalyzes the ATP-dependent loading of PCNA onto primed and gapped DNA. Interacts with and stimulates DNA polymerase POLH. During DNA repair synthesis, involved in loading DNA polymerase POLE at the sites of local damage. This is Chromosome transmission fidelity protein 18 homolog (CHTF18) from Homo sapiens (Human).